The following is a 236-amino-acid chain: 7-cyano-7-deazaguanine synthase (236 aa).

Residue 7 to 17 (CSGGLDSVSLA) participates in ATP binding. Zn(2+) is bound by residues C185, C193, C196, and C199.

Belongs to the QueC family. Requires Zn(2+) as cofactor.

It carries out the reaction 7-carboxy-7-deazaguanine + NH4(+) + ATP = 7-cyano-7-deazaguanine + ADP + phosphate + H2O + H(+). The protein operates within purine metabolism; 7-cyano-7-deazaguanine biosynthesis. Catalyzes the ATP-dependent conversion of 7-carboxy-7-deazaguanine (CDG) to 7-cyano-7-deazaguanine (preQ(0)). This chain is 7-cyano-7-deazaguanine synthase, found in Rhizobium rhizogenes (strain K84 / ATCC BAA-868) (Agrobacterium radiobacter).